A 96-amino-acid chain; its full sequence is Small ribosomal subunit protein bS6 (96 aa).

This sequence belongs to the bacterial ribosomal protein bS6 family.

Functionally, binds together with bS18 to 16S ribosomal RNA. This is Small ribosomal subunit protein bS6 from Streptococcus pyogenes serotype M1.